We begin with the raw amino-acid sequence, 33 residues long: pyr operon leader peptide (33 aa).

This chain is pyr operon leader peptide (pyrL), found in Salmonella typhi.